The chain runs to 413 residues: S-adenosylmethionine synthase (413 aa).

ATP is bound at residue His-15. Asp-17 serves as a coordination point for Mg(2+). A K(+)-binding site is contributed by Glu-43. Residues Glu-56 and Gln-100 each coordinate L-methionine. The interval 100 to 110 (QSPDISQGVND) is flexible loop. ATP-binding positions include 171-173 (DGK), 248-249 (KF), Asp-257, 263-264 (RK), Ala-280, and Lys-284. Residue Asp-257 participates in L-methionine binding. Residue Lys-288 coordinates L-methionine.

Belongs to the AdoMet synthase family. Homotetramer; dimer of dimers. Requires Mg(2+) as cofactor. K(+) serves as cofactor.

Its subcellular location is the cytoplasm. It catalyses the reaction L-methionine + ATP + H2O = S-adenosyl-L-methionine + phosphate + diphosphate. The protein operates within amino-acid biosynthesis; S-adenosyl-L-methionine biosynthesis; S-adenosyl-L-methionine from L-methionine: step 1/1. In terms of biological role, catalyzes the formation of S-adenosylmethionine (AdoMet) from methionine and ATP. The overall synthetic reaction is composed of two sequential steps, AdoMet formation and the subsequent tripolyphosphate hydrolysis which occurs prior to release of AdoMet from the enzyme. The polypeptide is S-adenosylmethionine synthase (Prochlorococcus marinus (strain MIT 9301)).